The chain runs to 362 residues: Ferredoxin--NADP reductase, leaf-type isozyme, chloroplastic (362 aa).

Positions 1-20 (MATAVSAAVSLPSSKSTSFS) are disordered. Residues 1 to 62 (MATAVSAAVS…RAQVTTEAPA (62 aa)) constitute a chloroplast transit peptide. A compositionally biased stretch (low complexity) spans 10–20 (SLPSSKSTSFS). In terms of domain architecture, FAD-binding FR-type spans 83 to 205 (KEPYVGRCLL…TGPVGKEMLM (123 aa)). FAD contacts are provided by residues 141-144 (RLYS), 162-164 (CVK), Tyr168, 179-181 (VCS), and Thr220. NADP(+) contacts are provided by Ser144 and Lys164. NADP(+) contacts are provided by residues Thr220, 252–253 (VP), 282–283 (SR), Lys292, 321–322 (GL), and Glu360.

The protein belongs to the ferredoxin--NADP reductase type 1 family. The cofactor is FAD.

It localises to the plastid. It is found in the chloroplast stroma. The protein localises to the chloroplast thylakoid membrane. It carries out the reaction 2 reduced [2Fe-2S]-[ferredoxin] + NADP(+) + H(+) = 2 oxidized [2Fe-2S]-[ferredoxin] + NADPH. It functions in the pathway energy metabolism; photosynthesis. In terms of biological role, may play a key role in regulating the relative amounts of cyclic and non-cyclic electron flow to meet the demands of the plant for ATP and reducing power. This Nicotiana tabacum (Common tobacco) protein is Ferredoxin--NADP reductase, leaf-type isozyme, chloroplastic (PETH).